A 529-amino-acid chain; its full sequence is ATP synthase F(1) complex catalytic subunit beta, mitochondrial (529 aa).

A mitochondrion-targeting transit peptide spans 1–46 (MLSLVGRVASASASGALRGLSPSAALPQAQLLLRAAPAGVHPARDY). O-linked (GlcNAc) serine glycosylation occurs at S106. N6-acetyllysine; alternate occurs at positions 124, 133, and 161. Residues K124, K133, and K161 each carry the N6-succinyllysine; alternate modification. At K198 the chain carries N6-acetyllysine. ADP-binding residues include G209, V210, G211, K212, T213, and V214. An ATP-binding site is contributed by G209. Phosphate contacts are provided by G209, V210, G211, K212, and T213. ATP-binding residues include G211, K212, T213, and V214. T213 provides a ligand contact to Mg(2+). E238 lines the Mg(2+) pocket. ATP is bound at residue R239. 2 positions are modified to N6-acetyllysine; alternate: K259 and K264. K259 and K264 each carry N6-succinyllysine; alternate. T312 bears the Phosphothreonine mark. K426 carries the N6-acetyllysine modification. S433 is subject to Phosphoserine. 2 positions are modified to N6-acetyllysine: K480 and K485. The residue at position 522 (K522) is an N6-acetyllysine; alternate. An N6-succinyllysine; alternate modification is found at K522. The residue at position 529 (S529) is a Phosphoserine.

It belongs to the ATPase alpha/beta chains family. In terms of assembly, homotrimer. Component of the ATP synthase complex composed at least of ATP5F1A/subunit alpha, ATP5F1B/subunit beta, ATP5MC1/subunit c (homooctomer), MT-ATP6/subunit a, MT-ATP8/subunit 8, ATP5ME/subunit e, ATP5MF/subunit f, ATP5MG/subunit g, ATP5MK/subunit k, ATP5MJ/subunit j, ATP5F1C/subunit gamma, ATP5F1D/subunit delta, ATP5F1E/subunit epsilon, ATP5PF/subunit F6, ATP5PB/subunit b, ATP5PD/subunit d, ATP5PO/subunit OSCP. ATP synthase complex consists of a soluble F(1) head domain (subunits alpha(3) and beta(3)) - the catalytic core - and a membrane F(0) domain - the membrane proton channel (subunits c, a, 8, e, f, g, k and j). These two domains are linked by a central stalk (subunits gamma, delta, and epsilon) rotating inside the F1 region and a stationary peripheral stalk (subunits F6, b, d, and OSCP). Interacts with PPIF. Interacts with BCL2L1 isoform BCL-X(L); the interaction mediates the association of BCL2L1 isoform BCL-X(L) with the mitochondrial membrane F(1)F(0) ATP synthase and enhances neurons metabolic efficiency. Interacts with CLN5 and PPT1. Interacts with S100A1; this interaction increases F1-ATPase activity. Interacts with MTLN. Interacts with TTC5/STRAP; the interaction results in decreased mitochondrial ATP production. Acetylation of Lys-133 is observed in liver mitochondria from fasted mice but not from fed mice.

It localises to the mitochondrion inner membrane. The enzyme catalyses ATP + H2O + 4 H(+)(in) = ADP + phosphate + 5 H(+)(out). Functionally, catalytic subunit beta, of the mitochondrial membrane ATP synthase complex (F(1)F(0) ATP synthase or Complex V) that produces ATP from ADP in the presence of a proton gradient across the membrane which is generated by electron transport complexes of the respiratory chain. ATP synthase complex consist of a soluble F(1) head domain - the catalytic core - and a membrane F(1) domain - the membrane proton channel. These two domains are linked by a central stalk rotating inside the F(1) region and a stationary peripheral stalk. During catalysis, ATP synthesis in the catalytic domain of F(1) is coupled via a rotary mechanism of the central stalk subunits to proton translocation. In vivo, can only synthesize ATP although its ATP hydrolase activity can be activated artificially in vitro. With the subunit alpha (ATP5F1A), forms the catalytic core in the F(1) domain. The chain is ATP synthase F(1) complex catalytic subunit beta, mitochondrial from Mus musculus (Mouse).